The primary structure comprises 139 residues: MRIMGLDVGSKTVGVAISDPLGFTAQGLEIIQINEEQGQFGFDRVKELVDTYKVERFVVGLPKNMNNTSGPRVEASQAYGAKLEEFFGLPVDYQDERLTTVAAERMLIEQADISRNKRKKVIDKLAAQLILQNYLDRKF.

It belongs to the YqgF nuclease family.

Its subcellular location is the cytoplasm. In terms of biological role, could be a nuclease involved in processing of the 5'-end of pre-16S rRNA. In Streptococcus pneumoniae (strain JJA), this protein is Putative pre-16S rRNA nuclease.